The primary structure comprises 364 residues: Autophagy-related protein 5 (364 aa).

Residues 1–13 (MASPNPYSYSPQL) show a composition bias toward polar residues. The interval 1–103 (MASPNPYSYS…SLPPKPKPSS (103 aa)) is disordered. The segment covering 28 to 42 (SSPSFRSTPFRSSRG) has biased composition (low complexity). Gly residues predominate over residues 43–53 (TGAGTGIGLGL). Residues 72–82 (RSGDGSHDDLP) show a composition bias toward basic and acidic residues. K202 participates in a covalent cross-link: Glycyl lysine isopeptide (Lys-Gly) (interchain with G-Cter in ATG12). Residues 262–306 (PSSPSPPSSDQQQPQRPGGSSSSGSYRVMQTLVPPRGPNNRTPQT) form a disordered region. The span at 269 to 286 (SSDQQQPQRPGGSSSSGS) shows a compositional bias: low complexity.

The protein belongs to the ATG5 family. In terms of assembly, conjugated with atg12. In terms of processing, conjugated to atg12; which is essential for autophagy.

Its subcellular location is the preautophagosomal structure membrane. Involved in cytoplasm to vacuole transport (Cvt) and autophagic vesicle formation. Autophagy is essential for maintenance of amino acid levels and protein synthesis under nitrogen starvation. Required for selective autophagic degradation of the nucleus (nucleophagy). Also required for mitophagy, which eliminates defective or superfluous mitochondria in order to fulfill cellular energy requirements and prevent excess ROS production. Conjugation with atg12, through a ubiquitin-like conjugating system involving apg-5/atg7 as an E1-like activating enzyme and atg10 as an E2-like conjugating enzyme, is essential for its function. The atg12-apg-4/atg5 conjugate acts as an E3-like enzyme which is required for lipidation of apg-6/atg8 and apg-6/atg8 association to the vesicle membranes. The sequence is that of Autophagy-related protein 5 (apg-4) from Neurospora crassa (strain ATCC 24698 / 74-OR23-1A / CBS 708.71 / DSM 1257 / FGSC 987).